Reading from the N-terminus, the 251-residue chain is Ubiquinone/menaquinone biosynthesis C-methyltransferase UbiE (251 aa).

S-adenosyl-L-methionine is bound by residues threonine 74, aspartate 95, 123–124 (NA), and serine 140.

Belongs to the class I-like SAM-binding methyltransferase superfamily. MenG/UbiE family.

It carries out the reaction a 2-demethylmenaquinol + S-adenosyl-L-methionine = a menaquinol + S-adenosyl-L-homocysteine + H(+). The enzyme catalyses a 2-methoxy-6-(all-trans-polyprenyl)benzene-1,4-diol + S-adenosyl-L-methionine = a 5-methoxy-2-methyl-3-(all-trans-polyprenyl)benzene-1,4-diol + S-adenosyl-L-homocysteine + H(+). Its pathway is quinol/quinone metabolism; menaquinone biosynthesis; menaquinol from 1,4-dihydroxy-2-naphthoate: step 2/2. It functions in the pathway cofactor biosynthesis; ubiquinone biosynthesis. Its function is as follows. Methyltransferase required for the conversion of demethylmenaquinol (DMKH2) to menaquinol (MKH2) and the conversion of 2-polyprenyl-6-methoxy-1,4-benzoquinol (DDMQH2) to 2-polyprenyl-3-methyl-6-methoxy-1,4-benzoquinol (DMQH2). This chain is Ubiquinone/menaquinone biosynthesis C-methyltransferase UbiE, found in Pectobacterium carotovorum subsp. carotovorum (strain PC1).